Here is a 509-residue protein sequence, read N- to C-terminus: Glycogen synthase 2 (509 aa).

Lys-15 contributes to the ADP-alpha-D-glucose binding site.

The protein belongs to the glycosyltransferase 1 family. Bacterial/plant glycogen synthase subfamily.

It catalyses the reaction [(1-&gt;4)-alpha-D-glucosyl](n) + ADP-alpha-D-glucose = [(1-&gt;4)-alpha-D-glucosyl](n+1) + ADP + H(+). Its pathway is glycan biosynthesis; glycogen biosynthesis. Synthesizes alpha-1,4-glucan chains using ADP-glucose. The chain is Glycogen synthase 2 (glgA2) from Agrobacterium fabrum (strain C58 / ATCC 33970) (Agrobacterium tumefaciens (strain C58)).